Reading from the N-terminus, the 110-residue chain is Large ribosomal subunit protein P2C (110 aa).

The segment at 83–110 is disordered; sequence APAAEEAAKEEAKEEEESDEDMGFGLFD. Residues 95-104 are compositionally biased toward acidic residues; that stretch reads KEEEESDEDM. Ser100 is subject to Phosphoserine.

The protein belongs to the eukaryotic ribosomal protein P1/P2 family. As to quaternary structure, component of the large ribosomal subunit (LSU). Mature yeast ribosomes consist of a small (40S) and a large (60S) subunit. The 40S small subunit contains 1 molecule of ribosomal RNA (18S rRNA) and at least 33 different proteins. The large 60S subunit contains 3 rRNA molecules (25S, 5.8S and 5S rRNA) and at least 46 different proteins. The acidic ribosomal P-proteins form the stalk structure of the 60S subunit. They are organized as a pentameric complex in which uL10/P0 interacts with 2 heterodimers of P1 and P2 proteins.

The protein resides in the cytoplasm. Functionally, component of the ribosome, a large ribonucleoprotein complex responsible for the synthesis of proteins in the cell. The small ribosomal subunit (SSU) binds messenger RNAs (mRNAs) and translates the encoded message by selecting cognate aminoacyl-transfer RNA (tRNA) molecules. The large subunit (LSU) contains the ribosomal catalytic site termed the peptidyl transferase center (PTC), which catalyzes the formation of peptide bonds, thereby polymerizing the amino acids delivered by tRNAs into a polypeptide chain. The nascent polypeptides leave the ribosome through a tunnel in the LSU and interact with protein factors that function in enzymatic processing, targeting, and the membrane insertion of nascent chains at the exit of the ribosomal tunnel. This is Large ribosomal subunit protein P2C (rpp203) from Schizosaccharomyces pombe (strain 972 / ATCC 24843) (Fission yeast).